A 344-amino-acid polypeptide reads, in one-letter code: Methionine import ATP-binding protein MetN (344 aa).

In terms of domain architecture, ABC transporter spans 2-241 (IEIRNLSQRF…PHHEVTRALI (240 aa)). ATP is bound at residue 38 to 45 (GRSGAGKS).

Belongs to the ABC transporter superfamily. Methionine importer (TC 3.A.1.24) family. In terms of assembly, the complex is composed of two ATP-binding proteins (MetN), two transmembrane proteins (MetI) and a solute-binding protein (MetQ).

The protein resides in the cell inner membrane. The enzyme catalyses L-methionine(out) + ATP + H2O = L-methionine(in) + ADP + phosphate + H(+). It catalyses the reaction D-methionine(out) + ATP + H2O = D-methionine(in) + ADP + phosphate + H(+). Functionally, part of the ABC transporter complex MetNIQ involved in methionine import. Responsible for energy coupling to the transport system. In Burkholderia thailandensis (strain ATCC 700388 / DSM 13276 / CCUG 48851 / CIP 106301 / E264), this protein is Methionine import ATP-binding protein MetN.